The following is a 341-amino-acid chain: C2 calcium-dependent domain-containing protein 4D (341 aa).

A compositionally biased stretch (basic and acidic residues) spans 56–71; it reads RLRDPRGAEGRVDRNP. 2 disordered regions span residues 56-75 and 134-176; these read RLRD…GGRN and CRAP…PYAP. A compositionally biased stretch (low complexity) spans 139–149; it reads SDTASSPDSSP. The region spanning 205 to 331 is the C2 domain; that stretch reads RGGQLRLSTE…PPLAGGLGPG (127 aa).

This chain is C2 calcium-dependent domain-containing protein 4D (C2cd4d), found in Mus musculus (Mouse).